Consider the following 601-residue polypeptide: Trehalose synthase/amylase TreS (601 aa).

Residues 1 to 21 (MNEAEHSVEHPPVQGSHVEGG) form a disordered region. Substrate is bound at residue Asp98. Asn140 contributes to the Ca(2+) binding site. Residues His141 and Gln206 each contribute to the substrate site. Ca(2+) is bound at residue Asp208. Arg236 is a substrate binding site. Asp238 serves as the catalytic Nucleophile. 3 residues coordinate Ca(2+): Tyr242, Leu243, and Glu245. Glu280 acts as the Proton donor in catalysis. Residues His349 and Asp350 each coordinate substrate.

Belongs to the glycosyl hydrolase 13 family. TreS subfamily. Homohexamer.

It catalyses the reaction D-maltose = alpha,alpha-trehalose. The enzyme catalyses Endohydrolysis of (1-&gt;4)-alpha-D-glucosidic linkages in polysaccharides containing three or more (1-&gt;4)-alpha-linked D-glucose units.. It functions in the pathway glycan biosynthesis; glycogen biosynthesis. The protein operates within capsule biogenesis; capsule polysaccharide biosynthesis. Catalyzes the reversible interconversion of maltose and trehalose by transglucosylation. Also displays amylase activity, catalyzing the endohydrolysis of (1-&gt;4)-alpha-D-glucosidic linkages in glycogen and maltooligosaccharides such as maltoheptaose, to produce maltose which then can be converted to trehalose. TreS plays a key role in the utilization of trehalose for the production of glycogen and alpha-glucan via the TreS-Pep2 branch involved in the biosynthesis of maltose-1-phosphate (M1P). Might also function as a sensor and/or regulator of trehalose levels within the cell. Thus, when trehalose levels in the cell become dangerously low, TreS could expedite the conversion of glycogen to maltose via its amylase activity and then convert the maltose to trehalose; but this enzyme also could expedite or promote the conversion of trehalose to glycogen when cytoplasmic trehalose levels become too high. In Mycobacterium tuberculosis (strain CDC 1551 / Oshkosh), this protein is Trehalose synthase/amylase TreS.